Consider the following 201-residue polypeptide: MASKVVTGVVKTTAGGVVPVSQKYTVQSVGVWERIRRAFAIDPNRSNGVPLVPYNRNPSPGSLDPLAYDDPVTIPAGDIADNPYWKRDARRNYPRLSVVGQAEAVALLSVGSASHPRVELVGENGSKQLVAAQEAGKTGGLAKYFEGTGVEAGKLVLAETGGLPPLPSGEKLGEGGKWDVYKYQLAEEPSYSEAYPCRSFS.

Complex I is composed of about 40 different subunits.

It localises to the mitochondrion inner membrane. It catalyses the reaction a ubiquinone + NADH + 5 H(+)(in) = a ubiquinol + NAD(+) + 4 H(+)(out). Transfer of electrons from NADH to the respiratory chain. The immediate electron acceptor for the enzyme is believed to be ubiquinone. The protein is NADH-ubiquinone oxidoreductase 21.3 kDa subunit of Neurospora crassa (strain ATCC 24698 / 74-OR23-1A / CBS 708.71 / DSM 1257 / FGSC 987).